Here is a 123-residue protein sequence, read N- to C-terminus: Small ribosomal subunit protein uS12c (123 aa).

Belongs to the universal ribosomal protein uS12 family. In terms of assembly, part of the 30S ribosomal subunit.

The protein resides in the plastid. Its subcellular location is the chloroplast. Its function is as follows. With S4 and S5 plays an important role in translational accuracy. Located at the interface of the 30S and 50S subunits. In Chlorokybus atmophyticus (Soil alga), this protein is Small ribosomal subunit protein uS12c (rps12).